Consider the following 210-residue polypeptide: Cell division protein SepF (210 aa).

This sequence belongs to the SepF family. In terms of assembly, homodimer. Interacts with FtsZ.

The protein localises to the cytoplasm. Its function is as follows. Cell division protein that is part of the divisome complex and is recruited early to the Z-ring. Probably stimulates Z-ring formation, perhaps through the cross-linking of FtsZ protofilaments. Its function overlaps with FtsA. This chain is Cell division protein SepF, found in Mycobacterium leprae (strain Br4923).